The chain runs to 1361 residues: DNA-directed RNA polymerase subunit beta (1361 aa).

Belongs to the RNA polymerase beta chain family. The RNAP catalytic core consists of 2 alpha, 1 beta, 1 beta' and 1 omega subunit. When a sigma factor is associated with the core the holoenzyme is formed, which can initiate transcription.

The catalysed reaction is RNA(n) + a ribonucleoside 5'-triphosphate = RNA(n+1) + diphosphate. DNA-dependent RNA polymerase catalyzes the transcription of DNA into RNA using the four ribonucleoside triphosphates as substrates. The polypeptide is DNA-directed RNA polymerase subunit beta (Saccharophagus degradans (strain 2-40 / ATCC 43961 / DSM 17024)).